The chain runs to 347 residues: NADH-ubiquinone oxidoreductase chain 2 (347 aa).

The next 9 helical transmembrane spans lie at 5–22 (ILTI…MVLI), 26–45 (WLTV…PILM), 60–80 (FLTQ…NLLL), 150–170 (NPNL…WGGL), 178–198 (ILAY…TYNP), 200–220 (LMML…MLFM), 242–262 (SLIL…GFIP), 274–294 (NMII…YFYM), and 324–344 (TLLP…PMML).

Belongs to the complex I subunit 2 family. Core subunit of respiratory chain NADH dehydrogenase (Complex I) which is composed of 45 different subunits. Interacts with TMEM242.

It localises to the mitochondrion inner membrane. It carries out the reaction a ubiquinone + NADH + 5 H(+)(in) = a ubiquinol + NAD(+) + 4 H(+)(out). Functionally, core subunit of the mitochondrial membrane respiratory chain NADH dehydrogenase (Complex I) which catalyzes electron transfer from NADH through the respiratory chain, using ubiquinone as an electron acceptor. Essential for the catalytic activity and assembly of complex I. The protein is NADH-ubiquinone oxidoreductase chain 2 of Martes flavigula (Yellow-throated marten).